A 339-amino-acid chain; its full sequence is 1-aminocyclopropane-1-carboxylate deaminase (339 aa).

An N6-(pyridoxal phosphate)lysine modification is found at Lys-52. Ser-79 (nucleophile) is an active-site residue.

Belongs to the ACC deaminase/D-cysteine desulfhydrase family. Homotrimer. The cofactor is pyridoxal 5'-phosphate.

It carries out the reaction 1-aminocyclopropane-1-carboxylate + H2O = 2-oxobutanoate + NH4(+). In terms of biological role, catalyzes a cyclopropane ring-opening reaction, the irreversible conversion of 1-aminocyclopropane-1-carboxylate (ACC) to ammonia and alpha-ketobutyrate. Allows growth on ACC as a nitrogen source. The protein is 1-aminocyclopropane-1-carboxylate deaminase of Bradyrhizobium sp. (strain BTAi1 / ATCC BAA-1182).